The primary structure comprises 261 residues: Carbonic anhydrase 1 (261 aa).

Alanine 2 bears the N-acetylalanine mark. The 258-residue stretch at 4 to 261 folds into the Alpha-carbonic anhydrase domain; sequence ADWGYGSENG…LKGRTVRASF (258 aa). The active-site Proton donor/acceptor is histidine 65. Zn(2+) is bound by residues histidine 95, histidine 97, and histidine 120. Residues threonine 200 and 200–201 contribute to the substrate site; that span reads TH. Residues 239 to 261 form a disordered region; sequence AVPVLSNHRPPQPLKGRTVRASF.

Belongs to the alpha-carbonic anhydrase family. Requires Zn(2+) as cofactor.

It is found in the cytoplasm. The enzyme catalyses hydrogencarbonate + H(+) = CO2 + H2O. It catalyses the reaction urea = cyanamide + H2O. Its activity is regulated as follows. Inhibited by acetazolamide. Catalyzes the reversible hydration of carbon dioxide. Can hydrate cyanamide to urea. The protein is Carbonic anhydrase 1 (Ca1) of Mus musculus (Mouse).